The sequence spans 318 residues: Aspartate carbamoyltransferase catalytic subunit (318 aa).

Residues Arg-54 and Thr-55 each coordinate carbamoyl phosphate. Lys-82 contacts L-aspartate. Residues Arg-104, His-134, and Gln-137 each contribute to the carbamoyl phosphate site. Arg-174 and Arg-230 together coordinate L-aspartate. Residues Gly-271 and Pro-272 each contribute to the carbamoyl phosphate site.

The protein belongs to the aspartate/ornithine carbamoyltransferase superfamily. ATCase family. Heterododecamer (2C3:3R2) of six catalytic PyrB chains organized as two trimers (C3), and six regulatory PyrI chains organized as three dimers (R2).

It carries out the reaction carbamoyl phosphate + L-aspartate = N-carbamoyl-L-aspartate + phosphate + H(+). Its pathway is pyrimidine metabolism; UMP biosynthesis via de novo pathway; (S)-dihydroorotate from bicarbonate: step 2/3. Its function is as follows. Catalyzes the condensation of carbamoyl phosphate and aspartate to form carbamoyl aspartate and inorganic phosphate, the committed step in the de novo pyrimidine nucleotide biosynthesis pathway. This Clavibacter sepedonicus (Clavibacter michiganensis subsp. sepedonicus) protein is Aspartate carbamoyltransferase catalytic subunit.